Reading from the N-terminus, the 835-residue chain is MSRRKQGKPQHLSKREFSPEPLEAILTDDEPDHGPLGAPEGDHDLLTCGQCQMNFPLGDILIFIEHKRKQCNGSLCLEKAVDKPPSPSPIEMKKASNPVEVGIQVTPEDDDCLSTSSRGICPKQEHIADKLLHWRGLSSPRSAHGALIPTPGMSAEYAPQGICKDEPSSYTCTTCKQPFTSAWFLLQHAQNTHGLRIYLESEHGSPLTPRVGIPSGLGAECPSQPPLHGIHIADNNPFNLLRIPGSVSREASGLAEGRFPPTPPLFSPPPRHHLDPHRIERLGAEEMALATHHPSAFDRVLRLNPMAMEPPAMDFSRRLRELAGNTSSPPLSPGRPSPMQRLLQPFQPGSKPPFLATPPLPPLQSAPPPSQPPVKSKSCEFCGKTFKFQSNLVVHRRSHTGEKPYKCNLCDHACTQASKLKRHMKTHMHKSSPMTVKSDDGLSTASSPEPGTSDLVGSASSALKSVVAKFKSENDPNLIPENGDEEEEEDDEEEEEEEEEEEEELTESERVDYGFGLSLEAARHHENSSRGAVVGVGDESRALPDVMQGMVLSSMQHFSEAFHQVLGEKHKRGHLAEAEGHRDTCDEDSVAGESDRIDDGTVNGRGCSPGESASGGLSKKLLLGSPSSLSPFSKRIKLEKEFDLPPAAMPNTENVYSQWLAGYAASRQLKDPFLSFGDSRQSPFASSSEHSSENGSLRFSTPPGELDGGISGRSGTGSGGSTPHISGPGPGRPSSKEGRRSDTCEYCGKVFKNCSNLTVHRRSHTGERPYKCELCNYACAQSSKLTRHMKTHGQVGKDVYKCEICKMPFSVYSTLEKHMKKWHSDRVLNNDIKTE.

Residues 1 to 12 show a composition bias toward basic residues; it reads MSRRKQGKPQHL. Residues 1 to 41 are disordered; the sequence is MSRRKQGKPQHLSKREFSPEPLEAILTDDEPDHGPLGAPEG. Residues 1 to 210 are required for nuclear body formation and for SUMO1 recruitment; sequence MSRRKQGKPQ…SEHGSPLTPR (210 aa). Residues 45–71 form a C2HC-type zinc finger; it reads LLTCGQCQMNFPLGDILIFIEHKRKQC. Residues Cys-48, Cys-51, His-66, and Cys-71 each coordinate Zn(2+). Ser-86 bears the Phosphoserine mark. Residues Lys-123 and Lys-164 each participate in a glycyl lysine isopeptide (Lys-Gly) (interchain with G-Cter in SUMO2) cross-link. The C2H2-type 1 zinc-finger motif lies at 170–193; sequence YTCTTCKQPFTSAWFLLQHAQNTH. Ser-205 carries the post-translational modification Phosphoserine. The residue at position 271 (Arg-271) is an Asymmetric dimethylarginine. A disordered region spans residues 323 to 376; that stretch reads AGNTSSPPLSPGRPSPMQRLLQPFQPGSKPPFLATPPLPPLQSAPPPSQPPVKS. Residues Ser-332 and Ser-337 each carry the phosphoserine modification. Residues 355–372 are compositionally biased toward pro residues; the sequence is LATPPLPPLQSAPPPSQP. C2H2-type zinc fingers lie at residues 377-399 and 405-429; these read KSCEFCGKTFKFQSNLVVHRRSH and YKCNLCDHACTQASKLKRHMKTHMH. A compositionally biased stretch (basic residues) spans 421 to 430; sequence KRHMKTHMHK. Disordered regions lie at residues 421–458, 471–512, and 572–619; these read KRHMKTHMHKSSPMTVKSDDGLSTASSPEPGTSDLVGS, KSEN…ERVD, and RGHL…GLSK. Positions 441 to 450 are enriched in polar residues; it reads GLSTASSPEP. Ser-446 and Ser-447 each carry phosphoserine. Residues 482-506 are compositionally biased toward acidic residues; that stretch reads NGDEEEEEDDEEEEEEEEEEEEELT. Over residues 574–584 the composition is skewed to basic and acidic residues; sequence HLAEAEGHRDT. Position 608 is a phosphoserine (Ser-608). Residue Lys-620 forms a Glycyl lysine isopeptide (Lys-Gly) (interchain with G-Cter in SUMO2) linkage. Ser-625 and Ser-630 each carry phosphoserine. Lys-634 participates in a covalent cross-link: Glycyl lysine isopeptide (Lys-Gly) (interchain with G-Cter in SUMO1). The interval 678–740 is disordered; that stretch reads DSRQSPFASS…GRPSSKEGRR (63 aa). The span at 682–696 shows a compositional bias: low complexity; that stretch reads SPFASSSEHSSENGS. Position 701 is a phosphothreonine (Thr-701). The segment covering 706-720 has biased composition (gly residues); it reads LDGGISGRSGTGSGG. The tract at residues 737-835 is DNA-binding; sequence EGRRSDTCEY…RVLNNDIKTE (99 aa). Residues 742 to 764 form a C2H2-type 4 zinc finger; sequence DTCEYCGKVFKNCSNLTVHRRSH. Cys-744, Cys-747, His-760, and His-764 together coordinate Zn(2+). Positions 765-769 are disordered; sequence TGERP. A C2H2-type 5 zinc finger spans residues 770–792; it reads YKCELCNYACAQSSKLTRHMKTH. Positions 772, 775, 788, and 792 each coordinate Zn(2+). Residues 793-799 are disordered; sequence GQVGKDV. Residues 800-823 form a C2H2-type 6 zinc finger; sequence YKCEICKMPFSVYSTLEKHMKKWH. Zn(2+)-binding residues include Cys-802, Cys-805, His-818, and His-823. Lys-833 participates in a covalent cross-link: Glycyl lysine isopeptide (Lys-Gly) (interchain with G-Cter in SUMO2).

In terms of assembly, homotetrameric; self-associates via C2HC-type zinc finger domain. Interacts with MTA2, a component of the nucleosome remodeling and deacetylase (NuRD) repressor complex. Interacts (via its C2H2-type zinc finger domains 4, 5 and 6) with promoter region of gamma-globulin. Interacts with NR2F1, PIAS3, NR2F2 and NR2F6. Isoform 1, isoform 2 and isoform 3 form homodimers and heterodimers. Isoform 2 interacts with TBR1. Post-translationally, sumoylated with SUMO1. Expressed at high levels in brain, spleen thymus, bone marrow and testis. Expressed in CD34-positive myeloid precursor cells, B-cells, monocytes and megakaryocytes. Expression is tightly regulated during B-cell development. As to expression, expressed in fetal and adult brain, and in the plasmacytoid dendritic cell.

It localises to the cytoplasm. The protein localises to the nucleus. Its subcellular location is the chromosome. It is found in the nucleus matrix. Functionally, transcription factor. Associated with the BAF SWI/SNF chromatin remodeling complex. Binds to the 5'-TGACCA-3' sequence motif in regulatory regions of target genes, including a distal promoter of the HBG1 hemoglobin subunit gamma-1 gene. Involved in regulation of the developmental switch from gamma- to beta-globin, probably via direct repression of HBG1; hence indirectly repressing fetal hemoglobin (HbF) level. Involved in brain development. May play a role in hematopoiesis. Essential factor in lymphopoiesis required for B-cell formation in fetal liver. May function as a modulator of the transcriptional repression activity of NR2F2. This is BCL11 transcription factor A (BCL11A) from Homo sapiens (Human).